A 214-amino-acid polypeptide reads, in one-letter code: Probable GTP-binding protein EngB (214 aa).

An EngB-type G domain is found at 31 to 214; the sequence is GPPEIAFAGR…LRAAILQTIA (184 aa). Residues 39–46, 66–70, 93–96, 160–163, and 194–196 contribute to the GTP site; these read GRSNVGKS, GRTQE, DMPG, TKSD, and TSS. Mg(2+)-binding residues include Ser-46 and Thr-68.

Belongs to the TRAFAC class TrmE-Era-EngA-EngB-Septin-like GTPase superfamily. EngB GTPase family. It depends on Mg(2+) as a cofactor.

Necessary for normal cell division and for the maintenance of normal septation. The chain is Probable GTP-binding protein EngB from Bartonella tribocorum (strain CIP 105476 / IBS 506).